A 333-amino-acid polypeptide reads, in one-letter code: COMPASS-like H3K4 histone methylase component WDR5B (333 aa).

WD repeat units follow at residues Met1 to Glu40, Gly41 to Arg80, Gly83 to Lys122, Gly126 to Lys167, His169 to Thr207, Asp211 to Thr252, Gly253 to Arg295, and Gly298 to Ala333.

In terms of assembly, unlike WDR5A, does not interact with RBL or TRO.

In Arabidopsis thaliana (Mouse-ear cress), this protein is COMPASS-like H3K4 histone methylase component WDR5B.